We begin with the raw amino-acid sequence, 166 residues long: Endoribonuclease YbeY (166 aa).

Zn(2+) is bound by residues His-132, His-136, and His-142.

The protein belongs to the endoribonuclease YbeY family. Zn(2+) is required as a cofactor.

It is found in the cytoplasm. Its function is as follows. Single strand-specific metallo-endoribonuclease involved in late-stage 70S ribosome quality control and in maturation of the 3' terminus of the 16S rRNA. In Clostridium botulinum (strain Eklund 17B / Type B), this protein is Endoribonuclease YbeY.